Here is a 311-residue protein sequence, read N- to C-terminus: Probable manganese-dependent inorganic pyrophosphatase (311 aa).

6 residues coordinate Mn(2+): histidine 9, aspartate 13, aspartate 15, aspartate 77, histidine 99, and aspartate 151.

The protein belongs to the PPase class C family. The cofactor is Mn(2+).

The protein resides in the cytoplasm. The enzyme catalyses diphosphate + H2O = 2 phosphate + H(+). In Streptococcus equi subsp. equi (strain 4047), this protein is Probable manganese-dependent inorganic pyrophosphatase.